The chain runs to 533 residues: Probable lipid II flippase MurJ (533 aa).

The next 13 membrane-spanning stretches (helical) occupy residues 25–45, 90–110, 131–151, 158–178, 192–212, 233–253, 274–294, 316–336, 350–370, 389–409, 412–432, 449–469, and 484–504; these read ETLMAAALGTGPMADVFYAAF, VLFSVLLLITIVMELAMPLLV, LAAVMFPYLMSMSLTAMMSGM, FFAAAVAPIFLNLVMISALFY, YLSWSVLVAGVLQLAVVYIGV, LLLLAIPAAITGGVTQINLVI, IYQLPLGVVGVAVGIVLLPEL, FVLFLTLPAAVALWLLSDDII, TTLVGSILAIFGLGLPAFVLI, YTAIAVAVNSALSILLFPVLA, GIALAEAVAGWLNAVQLFVTL, AMLLVSSAVMGGVIVYLSHRW, and GVLGLLILIAMAVYFIVAFLI.

This sequence belongs to the MurJ/MviN family.

It localises to the cell inner membrane. The protein operates within cell wall biogenesis; peptidoglycan biosynthesis. Involved in peptidoglycan biosynthesis. Transports lipid-linked peptidoglycan precursors from the inner to the outer leaflet of the cytoplasmic membrane. In Rhizobium tropici, this protein is Probable lipid II flippase MurJ.